We begin with the raw amino-acid sequence, 63 residues long: UPF0434 protein GDI0182/Gdia_2252 (63 aa).

This sequence belongs to the UPF0434 family.

This chain is UPF0434 protein GDI0182/Gdia_2252, found in Gluconacetobacter diazotrophicus (strain ATCC 49037 / DSM 5601 / CCUG 37298 / CIP 103539 / LMG 7603 / PAl5).